Here is a 471-residue protein sequence, read N- to C-terminus: MVSSQCSVANKNQTGKPFQKHLSLSISPPKSVLGDNLELQFSDVFGPMPEANSEEACDVAYDEPAVVYSRSHSLVGPSLVVSHSLKMNKLTLRETEDSVDLVECVEGESIKENDEFSGNDDTDSEKSPEEVSGVVGIEDFEVLKVVGQGAFGKVYQVRKKDTSEIYAMKVMRKDKIVEKNHAEYMKAERDILTKIDHPFIVQLKYSFQTKYRLYLVLDFINGGHLFFQLYHQGLFREDLARVYTAEIVSAVSHLHEKGIMHRDLKPENILMDVDGHVMLTDFGLAKEFEENTRSNSMCGTTEYMAPEIVRGKGHDKAADWWSVGILLYEMLTGKPPFLGSKGKIQQKIVKDKIKLPQFLSNEAHALLKGLLQKEPERRLGSGPSGAEEIKKHKWFKAINWKKLEAREVQPSFKPAVSGRQCIANFDKCWTDMSVLDSPASSPNSDAKANPFTNFTYVRPPHSFLHRTTSNL.

A disordered region spans residues 1–21 (MVSSQCSVANKNQTGKPFQKH). The Protein kinase domain occupies 140–395 (FEVLKVVGQG…AEEIKKHKWF (256 aa)). ATP-binding positions include 146–154 (VGQGAFGKV) and Lys169. Residue Asp263 is the Proton acceptor of the active site. The tract at residues 281–307 (DFGLAKEFEENTRSNSMCGTTEYMAPE) is activation loop. Position 296 is a phosphoserine; by PDPK1 (Ser296). An AGC-kinase C-terminal domain is found at 396–466 (KAINWKKLEA…VRPPHSFLHR (71 aa)). Phosphothreonine; by TOR is present on Thr455.

The protein belongs to the protein kinase superfamily. AGC Ser/Thr protein kinase family. S6 kinase subfamily. In terms of assembly, interacts with TAP46. Binds to MRF1. Post-translationally, undergoes serine-specific autophosphorylation. Phosphorylated at Thr-455 by TOR.

It carries out the reaction L-seryl-[protein] + ATP = O-phospho-L-seryl-[protein] + ADP + H(+). It catalyses the reaction L-threonyl-[protein] + ATP = O-phospho-L-threonyl-[protein] + ADP + H(+). Its activity is regulated as follows. Activated by PDK1. Downstream effector of TOR signaling pathway. May be involved in adaptation of plant to cold or high-salt conditions. Mediates the phosphorylation of MRFs (e.g. MRF1). This is Serine/threonine-protein kinase AtPK2/AtPK19 (ATPK2) from Arabidopsis thaliana (Mouse-ear cress).